Reading from the N-terminus, the 328-residue chain is GTP 3',8-cyclase (328 aa).

Residues 1–229 (MNTVDYLRIS…ESFVPGNGPA (229 aa)) enclose the Radical SAM core domain. Arginine 8 contributes to the GTP binding site. [4Fe-4S] cluster contacts are provided by cysteine 15 and cysteine 19. Tyrosine 21 contacts S-adenosyl-L-methionine. Cysteine 22 serves as a coordination point for [4Fe-4S] cluster. Arginine 60 contributes to the GTP binding site. Residue glycine 64 participates in S-adenosyl-L-methionine binding. Residue threonine 91 coordinates GTP. Serine 115 is an S-adenosyl-L-methionine binding site. Lysine 155 contacts GTP. Methionine 189 lines the S-adenosyl-L-methionine pocket. 2 residues coordinate [4Fe-4S] cluster: cysteine 252 and cysteine 255. Residue 257-259 (RMR) participates in GTP binding. Position 269 (cysteine 269) interacts with [4Fe-4S] cluster.

The protein belongs to the radical SAM superfamily. MoaA family. In terms of assembly, monomer and homodimer. [4Fe-4S] cluster is required as a cofactor.

It carries out the reaction GTP + AH2 + S-adenosyl-L-methionine = (8S)-3',8-cyclo-7,8-dihydroguanosine 5'-triphosphate + 5'-deoxyadenosine + L-methionine + A + H(+). It functions in the pathway cofactor biosynthesis; molybdopterin biosynthesis. Catalyzes the cyclization of GTP to (8S)-3',8-cyclo-7,8-dihydroguanosine 5'-triphosphate. This Trichodesmium erythraeum (strain IMS101) protein is GTP 3',8-cyclase.